We begin with the raw amino-acid sequence, 146 residues long: Large ribosomal subunit protein uL15 (146 aa).

Residues 1–13 show a composition bias toward basic and acidic residues; the sequence is MKLHELKAAEGSR. A disordered region spans residues 1–56; that stretch reads MKLHELKAAEGSRRVRNRVGRGAATGNGKTSGRGQKGQKARSGGKLRPGFEGGQLP. Residues 23 to 35 are compositionally biased toward gly residues; sequence AATGNGKTSGRGQ.

The protein belongs to the universal ribosomal protein uL15 family. In terms of assembly, part of the 50S ribosomal subunit.

In terms of biological role, binds to the 23S rRNA. The sequence is that of Large ribosomal subunit protein uL15 from Staphylococcus epidermidis (strain ATCC 35984 / DSM 28319 / BCRC 17069 / CCUG 31568 / BM 3577 / RP62A).